The following is a 688-amino-acid chain: DNA ligase (688 aa).

Residues 38-42 (DEEYD), 87-88 (SL), and Glu118 contribute to the NAD(+) site. Catalysis depends on Lys120, which acts as the N6-AMP-lysine intermediate. The NAD(+) site is built by Arg141, Glu175, Lys291, and Lys315. Zn(2+) contacts are provided by Cys409, Cys412, Cys428, and Cys433. Residues 590-679 (MKLDILKGLT…AELKGYNFDE (90 aa)) enclose the BRCT domain.

This sequence belongs to the NAD-dependent DNA ligase family. LigA subfamily. Mg(2+) serves as cofactor. Mn(2+) is required as a cofactor.

The catalysed reaction is NAD(+) + (deoxyribonucleotide)n-3'-hydroxyl + 5'-phospho-(deoxyribonucleotide)m = (deoxyribonucleotide)n+m + AMP + beta-nicotinamide D-nucleotide.. Its function is as follows. DNA ligase that catalyzes the formation of phosphodiester linkages between 5'-phosphoryl and 3'-hydroxyl groups in double-stranded DNA using NAD as a coenzyme and as the energy source for the reaction. It is essential for DNA replication and repair of damaged DNA. This Thermotoga petrophila (strain ATCC BAA-488 / DSM 13995 / JCM 10881 / RKU-1) protein is DNA ligase.